Consider the following 327-residue polypeptide: Zinc transport protein ZntB (327 aa).

Residues 1 to 273 lie on the Cytoplasmic side of the membrane; sequence MEAIKGSDVN…ARRTYTMSLM (273 aa). A helical transmembrane segment spans residues 274-294; sequence AMVFLPSTFLTGLFGVNLGGI. Topologically, residues 295-300 are periplasmic; the sequence is PGGGWR. The helical transmembrane segment at 301–321 threads the bilayer; the sequence is FGFSLFCILLVVLIGGVTLWL. Residues 322–327 are Cytoplasmic-facing; it reads HRSKWL.

It belongs to the CorA metal ion transporter (MIT) (TC 1.A.35) family.

The protein resides in the cell inner membrane. The enzyme catalyses Zn(2+)(out) + H(+)(out) = Zn(2+)(in) + H(+)(in). In terms of biological role, zinc transporter. Acts as a Zn(2+):proton symporter, which likely mediates zinc ion uptake. This Salmonella agona (strain SL483) protein is Zinc transport protein ZntB.